We begin with the raw amino-acid sequence, 264 residues long: Glutamate racemase (264 aa).

Residues 10 to 11 (DS) and 42 to 43 (YG) each bind substrate. Residue C73 is the Proton donor/acceptor of the active site. 74-75 (NT) lines the substrate pocket. C183 serves as the catalytic Proton donor/acceptor. Residue 184–185 (TH) participates in substrate binding.

The protein belongs to the aspartate/glutamate racemases family.

It catalyses the reaction L-glutamate = D-glutamate. It participates in cell wall biogenesis; peptidoglycan biosynthesis. Its function is as follows. Provides the (R)-glutamate required for cell wall biosynthesis. The chain is Glutamate racemase from Streptococcus pyogenes serotype M2 (strain MGAS10270).